A 150-amino-acid chain; its full sequence is Large ribosomal subunit protein bL9 (150 aa).

Belongs to the bacterial ribosomal protein bL9 family.

In terms of biological role, binds to the 23S rRNA. The sequence is that of Large ribosomal subunit protein bL9 from Halorhodospira halophila (strain DSM 244 / SL1) (Ectothiorhodospira halophila (strain DSM 244 / SL1)).